The following is a 301-amino-acid chain: Mitochondrial thiamine pyrophosphate carrier 1 (301 aa).

Solcar repeat units lie at residues 15–102 (VTPT…ISKS), 115–200 (SSAN…AREL), and 206–293 (RVPF…SLSF). 6 consecutive transmembrane segments (helical) span residues 20 to 38 (ALVA…TAPL), 79 to 99 (VPAE…YSII), 121 to 141 (LIVG…FDLL), 172 to 192 (IYAG…LMFW), 207 to 227 (VPFI…GITF), and 252 to 272 (IFVT…FGIS).

Belongs to the mitochondrial carrier (TC 2.A.29) family.

It localises to the mitochondrion inner membrane. Functionally, mitochondrial transporter that mediates uptake of thiamine pyrophosphate (ThPP) into mitochondria. The protein is Mitochondrial thiamine pyrophosphate carrier 1 (TPC1) of Candida albicans (strain SC5314 / ATCC MYA-2876) (Yeast).